A 288-amino-acid polypeptide reads, in one-letter code: MKLKFTKMHGAGNDFVVLDGIHQQIDLTPAQWRALASRHFGVGADQILIVEKPTRPDVDFRYRIVNADGSEVEHCGNGARCFVRFVTEQGMTDKRSVRVEVMNGVITLTLQDDGQVTVDMGAPELEPARVPFRAQGLPTHAEGADALYGLEVNGRTEWISAVSMGNPHAVQVVDDVENFPVLQDGPVIEHHPAFPNRVNAGFMQVVDRHAIRLRVYERGAGETLACGTGACAAVVAGIRRGLLDSPVRVHTHGGELTIAWDGGAEPVRMTGPATTVFEGSIDLAALPA.

The substrate site is built by asparagine 13, glutamine 46, and asparagine 66. Catalysis depends on cysteine 75, which acts as the Proton donor. Substrate is bound by residues glycine 76–asparagine 77, asparagine 166, asparagine 199, and glutamate 217–arginine 218. Cysteine 226 acts as the Proton acceptor in catalysis. Residue glycine 227–threonine 228 participates in substrate binding.

The protein belongs to the diaminopimelate epimerase family. In terms of assembly, homodimer.

The protein resides in the cytoplasm. It carries out the reaction (2S,6S)-2,6-diaminopimelate = meso-2,6-diaminopimelate. The protein operates within amino-acid biosynthesis; L-lysine biosynthesis via DAP pathway; DL-2,6-diaminopimelate from LL-2,6-diaminopimelate: step 1/1. Its function is as follows. Catalyzes the stereoinversion of LL-2,6-diaminopimelate (L,L-DAP) to meso-diaminopimelate (meso-DAP), a precursor of L-lysine and an essential component of the bacterial peptidoglycan. In Cupriavidus taiwanensis (strain DSM 17343 / BCRC 17206 / CCUG 44338 / CIP 107171 / LMG 19424 / R1) (Ralstonia taiwanensis (strain LMG 19424)), this protein is Diaminopimelate epimerase.